A 761-amino-acid polypeptide reads, in one-letter code: MELLHLLLFSWALSAHLFLALAQRSTYIVHLDKSLMPNVFTDHHHWHSSTIDSIKASVPSSVDRFHSAPKLVYSYDNVLHGFSAVLSKDELAALKKLPGFISAYKDRTVEPHTTHTSDFLKLNPSSGLWPASGLGQDVIVAVLDSGIWPESASFQDDGMPEIPKRWKGICKPGTQFNASMCNRKLIGANYFNKGILANDPTVNITMNSARDTDGHGTHCASITAGNFAKGVSHFGYAPGTARGVAPRARLAVYKFSFNEGTFTSDLIAAMDQAVADGVDMISISYGYRFIPLYEDAISIASFGAMMKGVLVSASAGNRGPGIGSLNNGSPWILCVASGHTDRTFAGTLTLGNGLKIRGWSLFPARAFVRDSPVIYNKTLSDCSSEELLSQVENPENTIVICDDNGDFSDQMRIITRARLKAAIFISEDPGVFRSATFPNPGVVVNKKEGKQVINYVKNSVTPTATITFQETYLDTKPAPVVAASSARGPSRSYLGISKPDILAPGVLILAAYPPNVFATSIGTNILLSTDYILESGTSMAAPHAAGIAAMLKAAHPEWSPSAIRSAMMTTADPLDNTRKPIKDSDNNKAATPLDMGAGHVDPNRALDPGLVYDATPQDYVNLLCSLNFTEEQFKTIARSSASHNCSNPSADLNYPSFIALYSIEGNFTLLEQKFKRTVTNVGKGAATYKAKLKAPKNSTISVSPQILVFKNKNEKQSYTLTIRYIGDEGQSRNVGSITWVEQNGNHSVRSPIVTSPIIEVW.

A signal peptide spans 1–22 (MELLHLLLFSWALSAHLFLALA). The propeptide occupies 23–112 (QRSTYIVHLD…AYKDRTVEPH (90 aa)). One can recognise an Inhibitor I9 domain in the interval 26-110 (TYIVHLDKSL…ISAYKDRTVE (85 aa)). A Peptidase S8 domain is found at 116 to 606 (TSDFLKLNPS…AGHVDPNRAL (491 aa)). The Charge relay system role is filled by aspartate 144. Cysteine 170 and cysteine 181 are oxidised to a cystine. Asparagine 177 and asparagine 203 each carry an N-linked (GlcNAc...) (complex) asparagine; alternate glycan. N-linked (GlcNAc...) (paucimannose) asparagine; alternate glycans are attached at residues asparagine 177 and asparagine 203. Residue histidine 215 is the Charge relay system of the active site. Asparagine 376 is a glycosylation site (N-linked (GlcNAc...) (paucimannose) asparagine; partial). Cysteine 382 and cysteine 401 are oxidised to a cystine. Serine 538 functions as the Charge relay system in the catalytic mechanism. Residues 574–598 (LDNTRKPIKDSDNNKAATPLDMGAG) form a disordered region. The segment covering 575 to 586 (DNTRKPIKDSDN) has biased composition (basic and acidic residues). Cysteine 624 and cysteine 645 are joined by a disulfide. 2 N-linked (GlcNAc...) (complex) asparagine; alternate glycosylation sites follow: asparagine 697 and asparagine 745. N-linked (GlcNAc...) (paucimannose) asparagine; alternate glycosylation is found at asparagine 697 and asparagine 745. The segment at 756–761 (PIIEVW) is necessary for prodomain cleavage and secretion.

The protein belongs to the peptidase S8 family. As to quaternary structure, homodimer. Post-translationally, propeptide is internally cleaved at Asn-38 and Asp-52 in a pH-dependent manner leading to the dissociation of the propeptide from the catalytic domain and resulting in the release of the active subtilase. Cleavage occurs at pH 5.7 and to a stronger extent at pH 5.2. In terms of tissue distribution, expressed in flowers, cotyledons and leaves with the highest expression in roots.

Its subcellular location is the secreted. Inhibited by 1 mM 4-(2-aminoethyl)-benzenesulfonyl fluoride (AEBSF), a general inhibitor of serine proteinases, but not by the more selective serine protease inhibitors N-alpha-tosyl-L-lysinyl-chloromethylketone (TLCK), N-tosyl-L-phenylalaninyl-chloromethylketone (TPCK), leupeptin, aprotinin or benzamidine. Its proteolytic activity is autoinhibited by the non-covalent binding of the propeptide to the catalytic domain. No effect on activity by the addition of CaCl(2) or calcium chelators. In terms of biological role, serine protease. Has preference for Gln in the P1 position and Lys in the P2 position of oligopeptide substrates. Active also with His in the P1 position. Involved in resistance against insects partly by regulating expression of systemic wound response genes and possibly by its post-ingestive activity in the insect gut. Apart from the role in defense, may be involved in regulation of pectin methylesterases (PMEs) activity and pectin methylesterification of the cell wall. This is Subtilisin-like protease SBT3 from Solanum lycopersicum (Tomato).